Consider the following 168-residue polypeptide: Peptide deformylase 1 (168 aa).

The Fe cation site is built by C91 and H133. Residue E134 is part of the active site. H137 is a Fe cation binding site.

This sequence belongs to the polypeptide deformylase family. Requires Fe(2+) as cofactor.

It carries out the reaction N-terminal N-formyl-L-methionyl-[peptide] + H2O = N-terminal L-methionyl-[peptide] + formate. Removes the formyl group from the N-terminal Met of newly synthesized proteins. Requires at least a dipeptide for an efficient rate of reaction. N-terminal L-methionine is a prerequisite for activity but the enzyme has broad specificity at other positions. The polypeptide is Peptide deformylase 1 (Shewanella oneidensis (strain ATCC 700550 / JCM 31522 / CIP 106686 / LMG 19005 / NCIMB 14063 / MR-1)).